Reading from the N-terminus, the 372-residue chain is Ligninase LG6 (372 aa).

A signal peptide spans 1–21 (MALKQLAAAVALALSIQAAQG). Residues 22–28 (AAVKEKR) constitute a propeptide that is removed on maturation. 2 cysteine pairs are disulfide-bonded: Cys-31–Cys-43 and Cys-62–Cys-148. His-75 (proton acceptor) is an active-site residue. Asp-76, Gly-94, Asp-96, and Ser-98 together coordinate Ca(2+). His-204 serves as a coordination point for heme b. Residues Ser-205, Asp-222, Thr-224, Val-227, and Asp-229 each contribute to the Ca(2+) site. Cys-277 and Cys-345 are disulfide-bonded. Asn-285 carries an N-linked (GlcNAc...) asparagine glycan. Positions 352-361 (TLTTLPGPET) are enriched in low complexity. A disordered region spans residues 352–372 (TLTTLPGPETSVQRIQPPPGA).

This sequence belongs to the peroxidase family. Ligninase subfamily. The cofactor is heme b. Ca(2+) is required as a cofactor.

The enzyme catalyses 1-(3,4-dimethoxyphenyl)-2-(2-methoxyphenoxy)propane-1,3-diol + H2O2 = 3,4-dimethoxybenzaldehyde + guaiacol + glycolaldehyde + H2O. It catalyses the reaction 2 (3,4-dimethoxyphenyl)methanol + H2O2 = 2 (3,4-dimethoxyphenyl)methanol radical + 2 H2O. It functions in the pathway secondary metabolite metabolism; lignin degradation. Functionally, depolymerization of lignin. Catalyzes the C(alpha)-C(beta) cleavage of the propyl side chains of lignin. The sequence is that of Ligninase LG6 (GLG6) from Phanerodontia chrysosporium (White-rot fungus).